The primary structure comprises 91 residues: Small ribosomal subunit protein bS20 (91 aa).

The disordered stretch occupies residues 1–28 (MANTASAEKRNRQAQKRRARNVQVRTGV).

The protein belongs to the bacterial ribosomal protein bS20 family.

Its function is as follows. Binds directly to 16S ribosomal RNA. The chain is Small ribosomal subunit protein bS20 from Anaeromyxobacter dehalogenans (strain 2CP-1 / ATCC BAA-258).